Consider the following 419-residue polypeptide: UDP-arabinose 4-epimerase 1 (419 aa).

Residues 1–21 are disordered; sequence MFSFGRARSQGRQNRSMSLGG. The Cytoplasmic portion of the chain corresponds to 1–32; sequence MFSFGRARSQGRQNRSMSLGGLDYADPKKKNN. The helical; Signal-anchor for type II membrane protein transmembrane segment at 33 to 51 threads the bilayer; that stretch reads YLGKILLTASLTALCIFML. Residues 52–419 lie on the Lumenal side of the membrane; sequence KQSPTFNTPS…GLTTSSVSVY (368 aa). Residue 72–103 participates in NAD(+) binding; that stretch reads HVLVTGGAGYIGSHAALRLLKESYRVTIVDNL. Residue Y220 is the Proton acceptor of the active site.

It belongs to the NAD(P)-dependent epimerase/dehydratase family. NAD(+) serves as cofactor. In terms of tissue distribution, high expression in roots. Also found in leaves, stems, flowers, and siliques.

Its subcellular location is the golgi apparatus. The protein resides in the golgi stack membrane. The enzyme catalyses UDP-beta-L-arabinopyranose = UDP-alpha-D-xylose. It participates in nucleotide-sugar biosynthesis; UDP-L-arabinose biosynthesis; UDP-L-arabinose from UDP-alpha-D-xylose: step 1/1. The protein operates within cell wall biogenesis; cell wall polysaccharide biosynthesis. In terms of biological role, acts as a UDP-D-xylose 4-epimerase but lacks both UDP-D-glucose and UDP-D-glucuronic acid 4-epimerase activities in vitro. This is UDP-arabinose 4-epimerase 1 from Arabidopsis thaliana (Mouse-ear cress).